Consider the following 249-residue polypeptide: Benzil reductase ((S)-benzoin forming) (249 aa).

NADP(+) is bound by residues isoleucine 6, asparagine 87, tyrosine 154, lysine 158, valine 189, and threonine 191. The Proton acceptor role is filled by tyrosine 154.

Belongs to the short-chain dehydrogenases/reductases (SDR) family.

It is found in the cytoplasm. The enzyme catalyses (S)-benzoin + NADP(+) = benzil + NADPH + H(+). It catalyses the reaction 2-hydroxy-1-phenyl-1-propanone + NADP(+) = 1-phenyl-1,2-propanedione + NADPH + H(+). Its activity is regulated as follows. Inhibited by Cibacron blue 3GA, a general SDR family inhibitor. In terms of biological role, reduces benzil stereospecifically to (S)-benzoin. Can also reduce 1-phenyl-1,2-propanedione, 1,4-naphthoquinone, 1-(4-methyl-phenyl)-2-phenyl-ethane-1,2-dione, 1-(4-fluoro-phenyl)-2-phenyl-ethane-1,2-dione, methyl benzoylformate and p-nitrobenzaldehyde in decreasing order. The polypeptide is Benzil reductase ((S)-benzoin forming) (Bacillus cereus).